The chain runs to 392 residues: Zinc transporter zipt-7.1 (392 aa).

The N-linked (GlcNAc...) asparagine glycan is linked to Asn-63. The next 2 membrane-spanning stretches (helical) occupy residues 82 to 102 and 114 to 134; these read VFSL…LFFI and ILLA…IIPH. A disordered region spans residues 139-162; it reads HSHGAHDHDHAHSHDHAHNDHSHD. Positions 142–162 are enriched in basic and acidic residues; it reads GAHDHDHAHSHDHAHNDHSHD. Residues 170–190 traverse the membrane as a helical segment; that stretch reads GIYVIAGILVFMMVEQLVRII. Asn-248 carries N-linked (GlcNAc...) asparagine glycosylation. 3 consecutive transmembrane segments (helical) span residues 255 to 275, 304 to 324, and 331 to 351; these read IGAS…TVLL, VTAL…NPVL, and GAIM…SVIP. Asn-361 carries an N-linked (GlcNAc...) asparagine glycan. A helical transmembrane segment spans residues 371 to 391; the sequence is SLVHLIAICMGVGMMYIVSLV.

The protein belongs to the ZIP transporter (TC 2.A.5) family. KE4/Catsup subfamily.

It is found in the membrane. Zinc transporter which regulates intracellular zinc levels. Required for spermatogenesis in both hermaphrodites and males where it resides in an inactive form in immature sperm, spermatids, but is likely activated in response to reduced spe-4 and spe-6 function. Upon activation, mediates the release of zinc from internal stores in spermatids into the cytoplasm. The resulting increase in cytoplasmic zinc levels promotes spermatid activation and subsequent differentiation into mature motile sperm that are capable of fertilization. In Caenorhabditis briggsae, this protein is Zinc transporter zipt-7.1.